We begin with the raw amino-acid sequence, 324 residues long: tRNA uridine(34) hydroxylase (324 aa).

The Rhodanese domain maps to 122–218; it reads QENRCLILDV…YGQQVGTGKW (97 aa). The active-site Cysteine persulfide intermediate is the C178.

The protein belongs to the TrhO family.

The catalysed reaction is uridine(34) in tRNA + AH2 + O2 = 5-hydroxyuridine(34) in tRNA + A + H2O. Its function is as follows. Catalyzes oxygen-dependent 5-hydroxyuridine (ho5U) modification at position 34 in tRNAs. In Chlamydia pneumoniae (Chlamydophila pneumoniae), this protein is tRNA uridine(34) hydroxylase.